The following is a 164-amino-acid chain: Peptide deformylase (164 aa).

Fe cation contacts are provided by Cys-87 and His-129. Residue Glu-130 is part of the active site. His-133 is a Fe cation binding site.

Belongs to the polypeptide deformylase family. The cofactor is Fe(2+).

It carries out the reaction N-terminal N-formyl-L-methionyl-[peptide] + H2O = N-terminal L-methionyl-[peptide] + formate. Removes the formyl group from the N-terminal Met of newly synthesized proteins. Requires at least a dipeptide for an efficient rate of reaction. N-terminal L-methionine is a prerequisite for activity but the enzyme has broad specificity at other positions. The protein is Peptide deformylase of Thermotoga neapolitana (strain ATCC 49049 / DSM 4359 / NBRC 107923 / NS-E).